A 346-amino-acid chain; its full sequence is fMet-Leu-Phe receptor (346 aa).

N-linked (GlcNAc...) asparagine glycosylation is found at Asn-1 and Asn-7. Over Asn-1–Ile-24 the chain is Extracellular. Residues Val-25–Val-47 traverse the membrane as a helical segment. Topologically, residues Ala-48–Thr-58 are cytoplasmic. Residues Ile-59–Val-80 traverse the membrane as a helical segment. At Lys-81–Phe-97 the chain is on the extracellular side. Cys-95 and Cys-173 are oxidised to a cystine. Residues Ile-98–Leu-118 traverse the membrane as a helical segment. Residues Asp-119–Ser-137 lie on the Cytoplasmic side of the membrane. The helical transmembrane segment at Leu-138–Ile-159 threads the bilayer. Topologically, residues Arg-160 to Arg-202 are extracellular. The chain crosses the membrane as a helical span at residues Phe-203 to Thr-223. Over Lys-224–Val-239 the chain is Cytoplasmic. The chain crosses the membrane as a helical span at residues Leu-240 to Val-263. The Extracellular segment spans residues Arg-264 to Val-282. The helical transmembrane segment at Thr-283 to Gly-302 threads the bilayer. Topologically, residues Gln-303–Ala-346 are cytoplasmic. The disordered stretch occupies residues Thr-322–Ala-346. Residues Glu-323–Pro-338 show a composition bias toward polar residues.

It belongs to the G-protein coupled receptor 1 family. Post-translationally, phosphorylated; which is necessary for desensitization.

Its subcellular location is the cell membrane. High affinity receptor for N-formyl-methionyl peptides (fMLP), which are powerful neutrophil chemotactic factors. Binding of fMLP to the receptor stimulates intracellular calcium mobilization and superoxide anion release. This response is mediated via a G-protein that activates a phosphatidylinositol-calcium second messenger system. Receptor for TAFA4, mediates its effects on chemoattracting macrophages, promoting phagocytosis and increasing ROS release. Receptor for cathepsin CTSG, leading to increased phagocyte chemotaxis. In Gorilla gorilla gorilla (Western lowland gorilla), this protein is fMet-Leu-Phe receptor (FPR1).